The sequence spans 120 residues: Nitrogenase-stabilizing/protective protein NifW (120 aa).

Belongs to the NifW family. In terms of assembly, homotrimer; associates with NifD.

Functionally, may protect the nitrogenase Fe-Mo protein from oxidative damage. The chain is Nitrogenase-stabilizing/protective protein NifW from Rhodospirillum rubrum (strain ATCC 11170 / ATH 1.1.1 / DSM 467 / LMG 4362 / NCIMB 8255 / S1).